Consider the following 516-residue polypeptide: 2-isopropylmalate synthase (516 aa).

The region spanning 5–268 is the Pyruvate carboxyltransferase domain; the sequence is LIIFDTTLRD…DLGIDTTQIV (264 aa). Mn(2+) contacts are provided by aspartate 14, histidine 202, histidine 204, and asparagine 239. A regulatory domain region spans residues 395 to 516; that stretch reads KFVSLSQHSE…DKLNPQRADI (122 aa).

The protein belongs to the alpha-IPM synthase/homocitrate synthase family. LeuA type 1 subfamily. Homodimer. Requires Mn(2+) as cofactor.

The protein resides in the cytoplasm. The catalysed reaction is 3-methyl-2-oxobutanoate + acetyl-CoA + H2O = (2S)-2-isopropylmalate + CoA + H(+). The protein operates within amino-acid biosynthesis; L-leucine biosynthesis; L-leucine from 3-methyl-2-oxobutanoate: step 1/4. Its function is as follows. Catalyzes the condensation of the acetyl group of acetyl-CoA with 3-methyl-2-oxobutanoate (2-ketoisovalerate) to form 3-carboxy-3-hydroxy-4-methylpentanoate (2-isopropylmalate). The sequence is that of 2-isopropylmalate synthase from Paraburkholderia phymatum (strain DSM 17167 / CIP 108236 / LMG 21445 / STM815) (Burkholderia phymatum).